Reading from the N-terminus, the 284-residue chain is Prestalk D11 protein (284 aa).

Positions 1-25 are cleaved as a signal peptide; the sequence is MLNKLILLLILSSCLVLSVKSEVNV. Residues 25–64 form an A-1 repeat; the sequence is VDCSLVRCAQPICKPHYRLNMTDSCCGRCEPCTDVACTLQ. The stretch at 65 to 82 is one B-1 repeat; the sequence is VKYCQDGEVPTGCCPCTL. The stretch at 88 to 126 is one A-2 repeat; the sequence is DCSLVKCARPVCKPYYRLNMTDSCCGRCEPCTGVACTLQ. A B-2 repeat occupies 127–144; it reads IKYCKDGEVPTGCCPCTP. A C-1 repeat occupies 145-159; the sequence is QPTKKPDCSKVPCPK. The stretch at 161 to 178 is one B-3 repeat; sequence LKYCQEGELPTGCCPCTP. One copy of the C-2 repeat lies at 179–193; it reads QPTKKPDCSRVPCPK. Residues 195–212 form a B-4 repeat; that stretch reads LKYCKEGELPTGCCPCTP. Residues 213–228 form a C-3 repeat; it reads QPTKKPDCSDVMCTMD. The B-5 repeat unit spans residues 229–246; the sequence is IRYCKNGELPTGCCPCTP. One copy of the C-4 repeat lies at 247–262; it reads QETKVPDCSKAMCTMD. The B-6 repeat unit spans residues 263-278; it reads IKYCKPGEKPFGCCPC.

The polypeptide is Prestalk D11 protein (ampA) (Dictyostelium discoideum (Social amoeba)).